The following is a 359-amino-acid chain: Tropomodulin-1 (359 aa).

The disordered stretch occupies residues 36-61; that stretch reads ELDPDNALLPAGLRQKDQTTKAPTGP. The segment at 39 to 138 is tropomyosin-binding; that stretch reads PDNALLPAGL…CDIAAILGMH (100 aa).

This sequence belongs to the tropomodulin family. As to quaternary structure, binds to the N-terminus of tropomyosin and to actin. Interacts with FLII.

The protein resides in the cytoplasm. The protein localises to the cytoskeleton. Its function is as follows. Blocks the elongation and depolymerization of the actin filaments at the pointed end. The Tmod/TM complex contributes to the formation of the short actin protofilament, which in turn defines the geometry of the membrane skeleton. The polypeptide is Tropomodulin-1 (Tmod1) (Rattus norvegicus (Rat)).